A 696-amino-acid chain; its full sequence is Polyribonucleotide nucleotidyltransferase (696 aa).

Residues Asp486 and Asp492 each contribute to the Mg(2+) site. Residues 553-612 (PRIIVRNIPKDRIGELIGPGGKNVRGISELTGAELYIEDDGRVTISGSNQESAEKAAKMV) form the KH domain. The S1 motif domain occupies 622–690 (GKIYEGKVKR…KTGKIDLSRK (69 aa)).

This sequence belongs to the polyribonucleotide nucleotidyltransferase family. Mg(2+) serves as cofactor.

The protein localises to the cytoplasm. The enzyme catalyses RNA(n+1) + phosphate = RNA(n) + a ribonucleoside 5'-diphosphate. Its function is as follows. Involved in mRNA degradation. Catalyzes the phosphorolysis of single-stranded polyribonucleotides processively in the 3'- to 5'-direction. This Leptospira borgpetersenii serovar Hardjo-bovis (strain JB197) protein is Polyribonucleotide nucleotidyltransferase.